Here is a 69-residue protein sequence, read N- to C-terminus: uncharacterized protein (69 aa).

The protein resides in the mitochondrion. This is an uncharacterized protein from Marchantia polymorpha (Common liverwort).